Here is a 422-residue protein sequence, read N- to C-terminus: Glutamate-1-semialdehyde 2,1-aminomutase (422 aa).

K264 bears the N6-(pyridoxal phosphate)lysine mark.

Belongs to the class-III pyridoxal-phosphate-dependent aminotransferase family. HemL subfamily. Homodimer. The cofactor is pyridoxal 5'-phosphate.

It localises to the cytoplasm. The enzyme catalyses (S)-4-amino-5-oxopentanoate = 5-aminolevulinate. Its pathway is porphyrin-containing compound metabolism; protoporphyrin-IX biosynthesis; 5-aminolevulinate from L-glutamyl-tRNA(Glu): step 2/2. The chain is Glutamate-1-semialdehyde 2,1-aminomutase from Clostridium tetani (strain Massachusetts / E88).